The sequence spans 347 residues: Fructose-1,6-bisphosphatase class 1 2 (347 aa).

Residues Glu-92, Asp-111, Leu-113, and Asp-114 each contribute to the Mg(2+) site. Substrate is bound by residues 114–117 (DGSS) and Asn-202. Residue Glu-274 participates in Mg(2+) binding.

It belongs to the FBPase class 1 family. Homotetramer. The cofactor is Mg(2+).

The protein localises to the cytoplasm. It catalyses the reaction beta-D-fructose 1,6-bisphosphate + H2O = beta-D-fructose 6-phosphate + phosphate. It participates in carbohydrate biosynthesis; Calvin cycle. The polypeptide is Fructose-1,6-bisphosphatase class 1 2 (Bradyrhizobium sp. (strain BTAi1 / ATCC BAA-1182)).